We begin with the raw amino-acid sequence, 87 residues long: MASKASGGSTRNGRDSNSKRLGVKAFGGQFVKAGSIIIRQRGTKVHPGKNVGLGSDYTIFALKDGIVKFEEKGKKNFVSIEPVEASA.

The span at 1-11 (MASKASGGSTR) shows a compositional bias: polar residues. The tract at residues 1–21 (MASKASGGSTRNGRDSNSKRL) is disordered.

It belongs to the bacterial ribosomal protein bL27 family.

This is Large ribosomal subunit protein bL27 from Hydrogenobaculum sp. (strain Y04AAS1).